The chain runs to 738 residues: Transcription activator of gluconeogenesis SMAC_06113 (738 aa).

The interval M1–P65 is disordered. Composition is skewed to basic and acidic residues over residues A28–E39 and G51–R64. The segment at residues C74–C102 is a DNA-binding region (zn(2)-C6 fungal-type). Disordered regions lie at residues S255 to G278, H328 to R404, G530 to P579, and S636 to N673. Polar residues-rich tracts occupy residues T337–P351 and G530–S540. Positions A475–G546 constitute a PAS domain. Low complexity-rich tracts occupy residues Q568–P579 and S636–G655.

It belongs to the ERT1/acuK family.

Its subcellular location is the nucleus. Transcription factor which regulates nonfermentable carbon utilization. Activator of gluconeogenetic genes. The chain is Transcription activator of gluconeogenesis SMAC_06113 from Sordaria macrospora (strain ATCC MYA-333 / DSM 997 / K(L3346) / K-hell).